A 317-amino-acid chain; its full sequence is Beta-ketoacyl-[acyl-carrier-protein] synthase III (317 aa).

Active-site residues include Cys112 and His244. The tract at residues 245–249 is ACP-binding; the sequence is QANIR. Asn274 is a catalytic residue.

Belongs to the thiolase-like superfamily. FabH family. Homodimer.

The protein localises to the cytoplasm. The catalysed reaction is malonyl-[ACP] + acetyl-CoA + H(+) = 3-oxobutanoyl-[ACP] + CO2 + CoA. Its pathway is lipid metabolism; fatty acid biosynthesis. Functionally, catalyzes the condensation reaction of fatty acid synthesis by the addition to an acyl acceptor of two carbons from malonyl-ACP. Catalyzes the first condensation reaction which initiates fatty acid synthesis and may therefore play a role in governing the total rate of fatty acid production. Possesses both acetoacetyl-ACP synthase and acetyl transacylase activities. Its substrate specificity determines the biosynthesis of branched-chain and/or straight-chain of fatty acids. In Rickettsia prowazekii (strain Madrid E), this protein is Beta-ketoacyl-[acyl-carrier-protein] synthase III.